The following is a 599-amino-acid chain: MLTRKPSAAAPAAYPTGRGGDTAVRQLQASPGIGAGAPRSGVGTGPPSPIALPPLRASNATTTAHTIGGSKHTMNDHLHLNSHGQIQVQQLFEDNSNKRTVLTTQPNGLTTVGKTGLPGVPERQLESIHRRQGSSTSLKSMEGMGKVKASPMTPEQAMKQYMQKLTAFEHHEIFSYPEIYFLGPNAKKRQGMTGGPNNGGYDDDQGSYVQVPHDHVAYRYEVLKVIGKGSFGQVVKAYDHKVHQHVALKMVRNEKRFHRQAAEEIRILEHLRKQDKDNTMNVIHMLENFTFRNHICMTFELLSMNLYELIKKNKFQGFSLPLVRKFAHSILQCLDALHKNRIIHCDLKPENILLKQQGRSSIKVIDFGSSCYEHQRVYTYIQSRFYRAPEVILGARYGMPIDMWSLGCILAELLTGYPLLPGEDEGDQLACMIELLGMPSQKLLDASKRAKNFVSSKGYPRYCTVTTLSDGSVVLNGGRSRRGKLRGPPESREWGNALKGCDDPLFLDFLKQCLEWDPAVRMTPGQALRHPWLRRRLPKPPTGEKTAVKRVTESTGAITSISKLPPPSSSASKLRTNLAQMTDANGNIQQRTVLPKLVS.

Residues 1–55 are disordered; sequence MLTRKPSAAAPAAYPTGRGGDTAVRQLQASPGIGAGAPRSGVGTGPPSPIALPPL. S30 carries the phosphoserine modification. T104 bears the Phosphothreonine; by ATM mark. The Nuclear localization signal motif lies at 187–189; the sequence is KKR. Positions 220–533 constitute a Protein kinase domain; the sequence is YEVLKVIGKG…PGQALRHPWL (314 aa). ATP-binding positions include 226–234, K249, and 299–302; these read IGKGSFGQV and FELL. D346 acts as the Proton acceptor in catalysis. Position 379 is a phosphothreonine; by MAP3K10 (T379). Residue Y380 is modified to Phosphotyrosine; by autocatalysis. The residue at position 440 (S440) is a Phosphoserine; by ATM. S447 carries the phosphoserine; by MAP3K10 modification.

It belongs to the protein kinase superfamily. CMGC Ser/Thr protein kinase family. MNB/DYRK subfamily. In terms of assembly, component of an E3 ligase complex containing DYRK2, EDD/UBR5, DDB1 and DCAF1 (EDVP complex). Interacts directly with EDD/UBR5, DDB1 and DCAF1. Interacts with SIAH2 and MDM2. Interacts with MAP3K10 and NFATC1. May also interact with CCNL2. The cofactor is Mg(2+). Requires Mn(2+) as cofactor. Post-translationally, autophosphorylates cotranslationally on the second tyrosine residue in the Tyr-X-Tyr motif in the activation loop, but once mature, does not have any protein tyrosine kinase activity. Phosphorylated at Thr-104 and Ser-440 by ATM in response to genotoxic stress. Under normal conditions, polyubiquitinated in the nucleus by MDM2, leading to its proteasomal degradation. Phosphorylation on Thr-104 and Ser-440 by ATM in response to genotoxic stress disrupts MDM2 binding and prevents MDM2-mediated ubiquitination and subsequent proteasomal degradation. Polyubiquitinated by SIAH2, leading to its proteasomal degradation. Polyubiquitinated by SIAH2 occurs under normal conditions, and is enhanced in response to hypoxia.

It localises to the cytoplasm. The protein localises to the nucleus. The enzyme catalyses L-seryl-[protein] + ATP = O-phospho-L-seryl-[protein] + ADP + H(+). It carries out the reaction L-threonyl-[protein] + ATP = O-phospho-L-threonyl-[protein] + ADP + H(+). It catalyses the reaction L-tyrosyl-[protein] + ATP = O-phospho-L-tyrosyl-[protein] + ADP + H(+). Activated by autophosphorylation on the second tyrosine residue in the Tyr-X-Tyr motif in the activation loop. Its function is as follows. Serine/threonine-protein kinase involved in the regulation of the mitotic cell cycle, cell proliferation, apoptosis, organization of the cytoskeleton and neurite outgrowth. Functions in part via its role in ubiquitin-dependent proteasomal protein degradation. Functions downstream of ATM and phosphorylates p53/TP53 at 'Ser-46', and thereby contributes to the induction of apoptosis in response to DNA damage. Phosphorylates NFATC1, and thereby inhibits its accumulation in the nucleus and its transcription factor activity. Phosphorylates EIF2B5 at 'Ser-544', enabling its subsequent phosphorylation and inhibition by GSK3B. Likewise, phosphorylation of NFATC1, CRMP2/DPYSL2 and CRMP4/DPYSL3 promotes their subsequent phosphorylation by GSK3B. May play a general role in the priming of GSK3 substrates. Inactivates GYS1 by phosphorylation at 'Ser-641', and potentially also a second phosphorylation site, thus regulating glycogen synthesis. Mediates EDVP E3 ligase complex formation and is required for the phosphorylation and subsequent degradation of KATNA1. Phosphorylates TERT at 'Ser-457', promoting TERT ubiquitination by the EDVP complex. Phosphorylates SIAH2, and thereby increases its ubiquitin ligase activity. Promotes the proteasomal degradation of MYC and JUN, and thereby regulates progress through the mitotic cell cycle and cell proliferation. Promotes proteasomal degradation of GLI2 and GLI3, and thereby plays a role in smoothened and sonic hedgehog signaling. Phosphorylates CRMP2/DPYSL2, CRMP4/DPYSL3, DCX, EIF2B5, EIF4EBP1, GLI2, GLI3, GYS1, JUN, MDM2, MYC, NFATC1, p53/TP53, TAU/MAPT and KATNA1. Can phosphorylate histone H1, histone H3 and histone H2B (in vitro). Can phosphorylate CARHSP1 (in vitro). Plays a role in cytoskeleton organization and neurite outgrowth via its phosphorylation of DCX. The protein is Dual specificity tyrosine-phosphorylation-regulated kinase 2 of Mus musculus (Mouse).